We begin with the raw amino-acid sequence, 1023 residues long: 2-oxoglutarate dehydrogenase complex component E1 (1023 aa).

Residues 1 to 40 (MFHLRTCAAKLRPLTASQTVKTFSQNRPAAARTFQQIRCY) constitute a mitochondrion transit peptide. Lysine 74 carries the N6-succinyllysine modification. Serine 100 bears the Phosphoserine mark. Ca(2+) contacts are provided by histidine 143, aspartate 156, and aspartate 158. Arginine 312 lines the thiamine diphosphate pocket. The residue at position 401 (lysine 401) is an N6-acetyllysine. Thiamine diphosphate-binding residues include aspartate 411, asparagine 444, and isoleucine 446. The Mg(2+) site is built by aspartate 411, asparagine 444, and isoleucine 446. Residue lysine 534 forms a Glycyl lysine isopeptide (Lys-Gly) (interchain with G-Cter in ubiquitin) linkage. Position 564 is an N6-succinyllysine (lysine 564). Glutamine 676 provides a ligand contact to thiamine diphosphate. Lysine 970 carries the N6-acetyllysine modification.

The protein belongs to the alpha-ketoglutarate dehydrogenase family. As to quaternary structure, homodimer. The 2-oxoglutarate dehydrogenase complex is composed of OGDH (2-oxoglutarate dehydrogenase; E1), DLST (dihydrolipoamide succinyltransferase; E2), DLD (dihydrolipoamide dehydrogenase; E3) and the assembly factor KGD4. It contains multiple copies of the three enzymatic components (E1, E2 and E3). In the nucleus, the 2-oxoglutarate dehydrogenase complex associates with KAT2A. Interacts with ABHD11; this interaction maintains the functional lipoylation of the 2-oxoglutarate dehydrogenase complex. Requires thiamine diphosphate as cofactor. Mg(2+) is required as a cofactor.

Its subcellular location is the mitochondrion. It localises to the nucleus. It catalyses the reaction N(6)-[(R)-lipoyl]-L-lysyl-[protein] + 2-oxoglutarate + H(+) = N(6)-[(R)-S(8)-succinyldihydrolipoyl]-L-lysyl-[protein] + CO2. Its activity is regulated as follows. Calcium ions and ADP stimulate, whereas ATP and NADH reduce catalytic activity. Its function is as follows. 2-oxoglutarate dehydrogenase (E1o) component of the 2-oxoglutarate dehydrogenase complex (OGDHC). Participates in the first step, rate limiting for the overall conversion of 2-oxoglutarate to succinyl-CoA and CO(2) catalyzed by the whole OGDHC. Catalyzes the irreversible decarboxylation of 2-oxoglutarate (alpha-ketoglutarate) via the thiamine diphosphate (ThDP) cofactor and subsequent transfer of the decarboxylated acyl intermediate on an oxidized dihydrolipoyl group that is covalently amidated to the E2 enzyme (dihydrolipoyllysine-residue succinyltransferase or DLST). Plays a key role in the Krebs (citric acid) cycle, which is a common pathway for oxidation of fuel molecules, including carbohydrates, fatty acids, and amino acids. Can catalyze the decarboxylation of 2-oxoadipate in vitro, but at a much lower rate than 2-oxoglutarate. Mainly active in the mitochondrion. A fraction of the 2-oxoglutarate dehydrogenase complex also localizes in the nucleus and is required for lysine succinylation of histones: associates with KAT2A on chromatin and provides succinyl-CoA to histone succinyltransferase KAT2A. The sequence is that of 2-oxoglutarate dehydrogenase complex component E1 from Macaca fascicularis (Crab-eating macaque).